Here is a 105-residue protein sequence, read N- to C-terminus: Defensin-like protein (105 aa).

An N-terminal signal peptide occupies residues M1–A25. Cystine bridges form between C28–C72, C39–C59, C45–C66, and C49–C68.

This sequence belongs to the DEFL family. In terms of tissue distribution, flower. Found in petals, stamen and pistils, but not in sepals. In particular, accumulation in a configuration surrounding the inner reproductive whorls.

It localises to the secreted. It is found in the cell wall. Its subcellular location is the vacuole. Involved in floral organogenesis. May play a protective role in flowers by protecting the reproductive organs from potential pathogen attack. In Nicotiana tabacum (Common tobacco), this protein is Defensin-like protein (FST).